Consider the following 285-residue polypeptide: Type II secretion system protein C (285 aa).

The Cytoplasmic segment spans residues 1 to 27 (MSKGIKMHNSVMRLTIPNKKIINYAPH). Residues 28–46 (IVTSIILFFICQQLAQLTW) form a helical membrane-spanning segment. The Periplasmic segment spans residues 47–285 (KIILPVNFTD…NDIYLALRDE (239 aa)).

It belongs to the GSP C family.

It localises to the cell inner membrane. Involved in a type II secretion system (T2SS, formerly general secretion pathway, GSP) for the export of proteins. Required for the translocation of pullulanase. In Klebsiella pneumoniae, this protein is Type II secretion system protein C (pulC).